Consider the following 243-residue polypeptide: 1-(5-phosphoribosyl)-5-[(5-phosphoribosylamino)methylideneamino] imidazole-4-carboxamide isomerase (243 aa).

The Proton acceptor role is filled by Asp-8. Asp-130 serves as the catalytic Proton donor.

Belongs to the HisA/HisF family.

It localises to the cytoplasm. It catalyses the reaction 1-(5-phospho-beta-D-ribosyl)-5-[(5-phospho-beta-D-ribosylamino)methylideneamino]imidazole-4-carboxamide = 5-[(5-phospho-1-deoxy-D-ribulos-1-ylimino)methylamino]-1-(5-phospho-beta-D-ribosyl)imidazole-4-carboxamide. It participates in amino-acid biosynthesis; L-histidine biosynthesis; L-histidine from 5-phospho-alpha-D-ribose 1-diphosphate: step 4/9. This chain is 1-(5-phosphoribosyl)-5-[(5-phosphoribosylamino)methylideneamino] imidazole-4-carboxamide isomerase, found in Ruthia magnifica subsp. Calyptogena magnifica.